Reading from the N-terminus, the 72-residue chain is Translation initiation factor IF-1 (72 aa).

In terms of domain architecture, S1-like spans 1 to 72 (MAKSDVIEME…SKGRIVYRAR (72 aa)).

It belongs to the IF-1 family. As to quaternary structure, component of the 30S ribosomal translation pre-initiation complex which assembles on the 30S ribosome in the order IF-2 and IF-3, IF-1 and N-formylmethionyl-tRNA(fMet); mRNA recruitment can occur at any time during PIC assembly.

The protein localises to the cytoplasm. Its function is as follows. One of the essential components for the initiation of protein synthesis. Stabilizes the binding of IF-2 and IF-3 on the 30S subunit to which N-formylmethionyl-tRNA(fMet) subsequently binds. Helps modulate mRNA selection, yielding the 30S pre-initiation complex (PIC). Upon addition of the 50S ribosomal subunit IF-1, IF-2 and IF-3 are released leaving the mature 70S translation initiation complex. This Marinobacter nauticus (strain ATCC 700491 / DSM 11845 / VT8) (Marinobacter aquaeolei) protein is Translation initiation factor IF-1.